The chain runs to 110 residues: MTTKIRIVIRSFDHPFLENHFGGLPPYTWKIGLPESRVLYTVLRSPHIDKKSREQFEMEIKKKYLVIKTEKHELRKKFFWLKRQRLFGAQYEILFFCKTRSDKGKLQRLL.

It belongs to the universal ribosomal protein uS10 family.

Its subcellular location is the mitochondrion. The chain is Small ribosomal subunit protein uS10m (RPS10) from Pisum sativum (Garden pea).